Reading from the N-terminus, the 483-residue chain is Myosin-binding protein H (483 aa).

The span at 1–15 shows a compositional bias: polar residues; sequence MTGKATSEASVSTPE. The tract at residues 1-78 is disordered; that stretch reads MTGKATSEAS…PEPPSEDVPS (78 aa). T2, T6, and T26 each carry phosphothreonine. The segment covering 41-66 has biased composition (low complexity); sequence QEQAPEPQKPQAQDPAAPAASAMPAA. The Fibronectin type-III 1 domain occupies 79 to 174; that stretch reads APLRLTLEDV…LDQPVHIQEI (96 aa). Residues 178 to 266 enclose the Ig-like C2-type 1 domain; that stretch reads PKIRVPRHLR…EGLEAKASID (89 aa). A Fibronectin type-III 2 domain is found at 275-370; it reads PPSSIKLLDV…TKELAHIHKA (96 aa). The 85-residue stretch at 388–472 folds into the Ig-like C2-type 2 domain; it reads PSFTQPLADH…INVLGEASVD (85 aa).

Belongs to the immunoglobulin superfamily. MyBP family. As to expression, skeletal muscle. Expressed at low levels in heart ventricles.

Its function is as follows. Binds to myosin; probably involved in interaction with thick myofilaments in the A-band. In Mus musculus (Mouse), this protein is Myosin-binding protein H (Mybph).